A 286-amino-acid polypeptide reads, in one-letter code: Phosphoribosylaminoimidazole-succinocarboxamide synthase (286 aa).

Belongs to the SAICAR synthetase family.

It catalyses the reaction 5-amino-1-(5-phospho-D-ribosyl)imidazole-4-carboxylate + L-aspartate + ATP = (2S)-2-[5-amino-1-(5-phospho-beta-D-ribosyl)imidazole-4-carboxamido]succinate + ADP + phosphate + 2 H(+). It participates in purine metabolism; IMP biosynthesis via de novo pathway; 5-amino-1-(5-phospho-D-ribosyl)imidazole-4-carboxamide from 5-amino-1-(5-phospho-D-ribosyl)imidazole-4-carboxylate: step 1/2. This Pasteurella multocida (strain Pm70) protein is Phosphoribosylaminoimidazole-succinocarboxamide synthase (purC).